The following is a 317-amino-acid chain: Small ribosomal subunit protein uS2 (317 aa).

S2 carries the post-translational modification N-acetylserine. Laminin-binding regions lie at residues 161–180 (IPCN…MLAR) and 205–229 (RDPE…EFQG). [DE]-W-[ST] repeat units follow at residues 230-232 (EWS), 245-247 (DWS), 288-290 (DWS), 297-299 (DWS), and 315-317 (EWS). Residues 242–317 (EVPDWSEGVQ…DWGGSTAEWS (76 aa)) are laminin-binding. A disordered region spans residues 278–317 (PGPTTEGYSEDWSAQPATEDWSAAPTAQAGDWGGSTAEWS).

This sequence belongs to the universal ribosomal protein uS2 family. In terms of assembly, monomer (37LRP) and homodimer (67LR). Component of the small ribosomal subunit. Mature ribosomes consist of a small (40S) and a large (60S) subunit. The 40S subunit contains about 33 different proteins and 1 molecule of RNA (18S). The 60S subunit contains about 49 different proteins and 3 molecules of RNA (28S, 5.8S and 5S). Interacts with rps21. Interacts with several laminins including at least lamb1. Interacts with mdk. Post-translationally, acylated. Acylation may be a prerequisite for conversion of the monomeric 37 kDa laminin receptor precursor (37LRP) to the mature dimeric 67 kDa laminin receptor (67LR), and may provide a mechanism for membrane association. Cleaved by stromelysin-3 (ST3) at the cell surface. Cleavage by stromelysin-3 may be a mechanism to alter cell-extracellular matrix interactions.

The protein localises to the cell membrane. It is found in the cytoplasm. Its subcellular location is the nucleus. In terms of biological role, required for the assembly and/or stability of the 40S ribosomal subunit. Required for the processing of the 20S rRNA-precursor to mature 18S rRNA in a late step of the maturation of 40S ribosomal subunits. Also functions as a cell surface receptor for laminin. Plays a role in cell adhesion to the basement membrane and in the consequent activation of signaling transduction pathways. May play a role in cell fate determination and tissue morphogenesis. This Ictalurus punctatus (Channel catfish) protein is Small ribosomal subunit protein uS2 (rpsa).